Reading from the N-terminus, the 81-residue chain is Photosystem I iron-sulfur center (81 aa).

4Fe-4S ferredoxin-type domains follow at residues 2 to 31 (SHAVKIYDTCIGCTQCVRACPTDVLEMVPW) and 39 to 68 (IASAPRTEDCVGCKRCEAACPTDFLSVRVY). 8 residues coordinate [4Fe-4S] cluster: Cys11, Cys14, Cys17, Cys21, Cys48, Cys51, Cys54, and Cys58.

As to quaternary structure, the eukaryotic PSI reaction center is composed of at least 11 subunits. [4Fe-4S] cluster is required as a cofactor.

The protein resides in the plastid. It localises to the chloroplast thylakoid membrane. The enzyme catalyses reduced [plastocyanin] + hnu + oxidized [2Fe-2S]-[ferredoxin] = oxidized [plastocyanin] + reduced [2Fe-2S]-[ferredoxin]. In terms of biological role, apoprotein for the two 4Fe-4S centers FA and FB of photosystem I (PSI); essential for photochemical activity. FB is the terminal electron acceptor of PSI, donating electrons to ferredoxin. The C-terminus interacts with PsaA/B/D and helps assemble the protein into the PSI complex. Required for binding of PsaD and PsaE to PSI. PSI is a plastocyanin/cytochrome c6-ferredoxin oxidoreductase, converting photonic excitation into a charge separation, which transfers an electron from the donor P700 chlorophyll pair to the spectroscopically characterized acceptors A0, A1, FX, FA and FB in turn. In Ostreococcus tauri, this protein is Photosystem I iron-sulfur center.